We begin with the raw amino-acid sequence, 106 residues long: Transcription and mRNA export factor SUS1 (106 aa).

The protein belongs to the ENY2 family. As to quaternary structure, component of the nuclear pore complex (NPC)-associated TREX-2 complex (transcription and export complex 2), composed of at least SUS1, SAC3, THP1, SEM1, and CDC31. TREX-2 contains 2 SUS1 chains. The TREX-2 complex interacts with the nucleoporin NUP1. Component of the 1.8 MDa SAGA transcription coactivator-HAT complex. SAGA is built of 5 distinct domains with specialized functions. Within the SAGA complex, SUS1, SGF11, SGF73 and UBP8 form an additional subcomplex of SAGA called the DUB module (deubiquitination module). Interacts directly with THP1, SAC3, SGF11, and with the RNA polymerase II.

Its subcellular location is the nucleus. The protein resides in the nucleoplasm. It is found in the cytoplasm. The protein localises to the P-body. Its function is as follows. Involved in mRNA export coupled transcription activation by association with both the TREX-2 and the SAGA complexes. At the promoters, SAGA is required for recruitment of the basal transcription machinery. It influences RNA polymerase II transcriptional activity through different activities such as TBP interaction and promoter selectivity, interaction with transcription activators, and chromatin modification through histone acetylation and deubiquitination. Within the SAGA complex, participates in a subcomplex required for deubiquitination of H2B and for the maintenance of steady-state H3 methylation levels. The TREX-2 complex functions in docking export-competent ribonucleoprotein particles (mRNPs) to the nuclear entrance of the nuclear pore complex (nuclear basket). TREX-2 participates in mRNA export and accurate chromatin positioning in the nucleus by tethering genes to the nuclear periphery. May also be involved in cytoplasmic mRNA decay by interaction with components of P-bodies. The sequence is that of Transcription and mRNA export factor SUS1 from Mycosarcoma maydis (Corn smut fungus).